Consider the following 101-residue polypeptide: Gibberellin-regulated protein 6 (101 aa).

An N-terminal signal peptide occupies residues 1-23 (MAKLITSFLLLTILFTFVCLTMS).

This sequence belongs to the GASA family. Post-translationally, six disulfide bonds may be present.

It localises to the secreted. In terms of biological role, gibberellin-regulated protein that may function in hormonal controlled steps of development such as seed germination, flowering and seed maturation. The sequence is that of Gibberellin-regulated protein 6 (GASA6) from Arabidopsis thaliana (Mouse-ear cress).